The sequence spans 512 residues: Probable cobyric acid synthase (512 aa).

The GATase cobBQ-type domain occupies Ser-275 to Ala-460. Cys-353 functions as the Nucleophile in the catalytic mechanism. His-452 is a catalytic residue.

Belongs to the CobB/CobQ family. CobQ subfamily.

It participates in cofactor biosynthesis; adenosylcobalamin biosynthesis. Functionally, catalyzes amidations at positions B, D, E, and G on adenosylcobyrinic A,C-diamide. NH(2) groups are provided by glutamine, and one molecule of ATP is hydrogenolyzed for each amidation. The chain is Probable cobyric acid synthase from Halobacterium salinarum (strain ATCC 29341 / DSM 671 / R1).